The chain runs to 347 residues: MTRSIDLAVVAGDGIGPEVVAEGLKVLDAALAGTDVTVRTTAYDLGAARWHATGETLTDEDLAALAQHDAILLGAIGDPGVPSGVLERGLLLKLRFAFDHYVNLRPSRLYPGVATPLAKGGDVDFVVVREGTEGPYVGNGGAIRVGTPHEIANEVSVNTAFGVERVVRDAFARADARPRKKLTLVHKHNVLVHAGHLWRRTVEAVGAEFPDVAVDYLHVDAATIFLVTDPARFDVVVTDNLFGDILTDLAAAITGGIGLAASGNINPDRAFPSMFEPVHGSAPDIAGQGKADPTATVLSVALLLEHLGLTEQAARITAAVESDIVERGSAVRSTAEVGDALAARVAG.

Residues Arg95, Arg105, Arg129, and Asp220 each coordinate substrate. Asp220, Asp244, and Asp248 together coordinate Mg(2+). Residue 280 to 292 coordinates NAD(+); that stretch reads GSAPDIAGQGKAD.

Belongs to the isocitrate and isopropylmalate dehydrogenases family. LeuB type 2 subfamily. As to quaternary structure, homodimer. Mg(2+) serves as cofactor. The cofactor is Mn(2+).

The protein resides in the cytoplasm. It catalyses the reaction (2R,3S)-3-isopropylmalate + NAD(+) = 4-methyl-2-oxopentanoate + CO2 + NADH. It participates in amino-acid biosynthesis; L-leucine biosynthesis; L-leucine from 3-methyl-2-oxobutanoate: step 3/4. Functionally, catalyzes the oxidation of 3-carboxy-2-hydroxy-4-methylpentanoate (3-isopropylmalate) to 3-carboxy-4-methyl-2-oxopentanoate. The product decarboxylates to 4-methyl-2 oxopentanoate. The chain is 3-isopropylmalate dehydrogenase from Beutenbergia cavernae (strain ATCC BAA-8 / DSM 12333 / CCUG 43141 / JCM 11478 / NBRC 16432 / NCIMB 13614 / HKI 0122).